Consider the following 748-residue polypeptide: Glucans biosynthesis glucosyltransferase H (748 aa).

A run of 7 helical transmembrane segments spans residues 85–107 (LIVRRLFIFVGTALLTLAGGYGM), 127–149 (FLVLLAWVAFSFMSALAGFFVLL), 443–465 (GIGSYVTAPLWLLFLLVGLLISL), 494–516 (AWVFAATMGLLILPKLLAYLVLI), 529–551 (GRVLAGVVCEAFVAALLAPCMMI), 587–606 (LAGPTLCGLVLSVCAYSVSL), and 608–630 (LLLWMSPVVLGLLLSIPLGIMTS).

The protein belongs to the glycosyltransferase 2 family. OpgH subfamily.

It is found in the cell inner membrane. It participates in glycan metabolism; osmoregulated periplasmic glucan (OPG) biosynthesis. In terms of biological role, involved in the biosynthesis of osmoregulated periplasmic glucans (OPGs). In Bradyrhizobium diazoefficiens (strain JCM 10833 / BCRC 13528 / IAM 13628 / NBRC 14792 / USDA 110), this protein is Glucans biosynthesis glucosyltransferase H.